Consider the following 590-residue polypeptide: DNA mismatch repair protein MutL (590 aa).

This sequence belongs to the DNA mismatch repair MutL/HexB family.

In terms of biological role, this protein is involved in the repair of mismatches in DNA. It is required for dam-dependent methyl-directed DNA mismatch repair. May act as a 'molecular matchmaker', a protein that promotes the formation of a stable complex between two or more DNA-binding proteins in an ATP-dependent manner without itself being part of a final effector complex. This Caldanaerobacter subterraneus subsp. tengcongensis (strain DSM 15242 / JCM 11007 / NBRC 100824 / MB4) (Thermoanaerobacter tengcongensis) protein is DNA mismatch repair protein MutL.